A 109-amino-acid chain; its full sequence is Small ribosomal subunit protein uS10 (109 aa).

It belongs to the universal ribosomal protein uS10 family. As to quaternary structure, part of the 30S ribosomal subunit.

In terms of biological role, involved in the binding of tRNA to the ribosomes. The protein is Small ribosomal subunit protein uS10 of Wolbachia pipientis wMel.